The chain runs to 182 residues: Epididymal-specific lipocalin-10 (182 aa).

The N-terminal stretch at 1–19 (MKLEMALSIALALAVVSWT) is a signal peptide. N-linked (GlcNAc...) asparagine glycosylation is found at Asn31 and Asn144. Cys85 and Cys176 form a disulfide bridge. Lys165 bears the N6-acetyllysine mark.

The protein belongs to the calycin superfamily. Lipocalin family. Expressed in epididymis.

It is found in the secreted. May play a role in male fertility. May act as a retinoid carrier protein within the epididymis. This chain is Epididymal-specific lipocalin-10 (Lcn10), found in Mus musculus (Mouse).